The sequence spans 75 residues: MSSGGLLLLLGLLTLWAELTPVSSLDRPKKPGLCPPRPQKPPCVRECKNDWRCPGEQKCCRYGCIYECRDPIFVK.

Residues 1–24 form the signal peptide; sequence MSSGGLLLLLGLLTLWAELTPVSS. The region spanning 27-72 is the WAP domain; the sequence is RPKKPGLCPPRPQKPPCVRECKNDWRCPGEQKCCRYGCIYECRDPI. Disulfide bonds link Cys34-Cys60, Cys43-Cys64, Cys47-Cys59, and Cys53-Cys68.

Belongs to the venom waprin family. Expressed by the venom gland.

It localises to the secreted. Functionally, damages membranes of susceptible bacteria. Has no hemolytic activity. Not toxic to mice. Does not inhibit the proteinases elastase and cathepsin G. This is Porwaprin-d from Pseudechis porphyriacus (Red-bellied black snake).